Here is a 135-residue protein sequence, read N- to C-terminus: MEKVFPHTAMTQANADPCFETGHICPIQHVVDLLDNKWSILVLRELFKGQRRTGQLLDALPGCSTKTLTLRLRQLETHGIINRDVYPEIPPRVEYSLTARGREIQPVLIAMHKLGSDWLEQESCECSLLTGEGPN.

One can recognise an HTH hxlR-type domain in the interval 25-123 (CPIQHVVDLL…LGSDWLEQES (99 aa)).

This is an uncharacterized protein from Synechocystis sp. (strain ATCC 27184 / PCC 6803 / Kazusa).